The sequence spans 262 residues: Type III pantothenate kinase (262 aa).

Residue 6-13 (DVGNTNAV) participates in ATP binding. Residues Tyr-100 and 107 to 110 (GADR) each bind substrate. The active-site Proton acceptor is the Asp-109. Residue Asp-129 coordinates K(+). Thr-132 is an ATP binding site. Residue Thr-184 coordinates substrate.

This sequence belongs to the type III pantothenate kinase family. In terms of assembly, homodimer. NH4(+) serves as cofactor. It depends on K(+) as a cofactor.

It is found in the cytoplasm. It carries out the reaction (R)-pantothenate + ATP = (R)-4'-phosphopantothenate + ADP + H(+). Its pathway is cofactor biosynthesis; coenzyme A biosynthesis; CoA from (R)-pantothenate: step 1/5. Its function is as follows. Catalyzes the phosphorylation of pantothenate (Pan), the first step in CoA biosynthesis. This is Type III pantothenate kinase from Bacillus cereus (strain B4264).